A 573-amino-acid chain; its full sequence is uncharacterized protein (573 aa).

An ABC transmembrane type-1 domain is found at 15–298 (AGIALILMLT…FPFLIMIFTR (284 aa)). The next 6 helical transmembrane spans lie at 17–37 (IALILMLTELAVELMQPLLIA), 52–72 (VWIWGTVMIGLTVLSFAAGML), 127–147 (IFMSLRFMLRAPLMIAGGIVL), 153–173 (VKLGFFLLVTIPILILFLLWV), 238–258 (FTMPVLMLLMNLCILLILWAG), and 275–295 (IINYATRITGALSMFPFLIMI). The region spanning 330 to 563 (IEFQHVSFRY…SQLYKRIYES (234 aa)) is the ABC transporter domain. 364 to 371 (GATGSGKS) lines the ATP pocket.

It belongs to the ABC transporter superfamily.

The protein resides in the cell membrane. This is an uncharacterized protein from Bacillus subtilis (strain 168).